A 123-amino-acid polypeptide reads, in one-letter code: Large ribosomal subunit protein uL14c (123 aa).

This sequence belongs to the universal ribosomal protein uL14 family. Part of the 50S ribosomal subunit. Interacts with IOJAP.

The protein resides in the plastid. Its subcellular location is the chloroplast. Its function is as follows. Binds to 23S rRNA. The chain is Large ribosomal subunit protein uL14c from Zea mays (Maize).